The chain runs to 55 residues: Photosystem I reaction center subunit IX (55 aa).

Residues 7-27 (YLSVAPVLSTLWFGSLAGLLI) traverse the membrane as a helical segment.

This sequence belongs to the PsaJ family.

Its subcellular location is the plastid. The protein localises to the chloroplast thylakoid membrane. In terms of biological role, may help in the organization of the PsaE and PsaF subunits. The sequence is that of Photosystem I reaction center subunit IX from Gossypium barbadense (Sea Island cotton).